The following is a 184-amino-acid chain: ATP synthase subunit b, chloroplastic (184 aa).

Residues 31–49 (IINSSVVLSVLIYFGKGVL) traverse the membrane as a helical segment.

Belongs to the ATPase B chain family. As to quaternary structure, F-type ATPases have 2 components, F(1) - the catalytic core - and F(0) - the membrane proton channel. F(1) has five subunits: alpha(3), beta(3), gamma(1), delta(1), epsilon(1). F(0) has four main subunits: a(1), b(1), b'(1) and c(10-14). The alpha and beta chains form an alternating ring which encloses part of the gamma chain. F(1) is attached to F(0) by a central stalk formed by the gamma and epsilon chains, while a peripheral stalk is formed by the delta, b and b' chains.

Its subcellular location is the plastid. It localises to the chloroplast thylakoid membrane. F(1)F(0) ATP synthase produces ATP from ADP in the presence of a proton or sodium gradient. F-type ATPases consist of two structural domains, F(1) containing the extramembraneous catalytic core and F(0) containing the membrane proton channel, linked together by a central stalk and a peripheral stalk. During catalysis, ATP synthesis in the catalytic domain of F(1) is coupled via a rotary mechanism of the central stalk subunits to proton translocation. Functionally, component of the F(0) channel, it forms part of the peripheral stalk, linking F(1) to F(0). This chain is ATP synthase subunit b, chloroplastic, found in Pinus thunbergii (Japanese black pine).